The following is a 249-amino-acid chain: Acetylglutamate kinase (249 aa).

Substrate is bound by residues 38 to 39 (GG), Arg-60, and Asn-147.

The protein belongs to the acetylglutamate kinase family. ArgB subfamily.

It is found in the cytoplasm. It carries out the reaction N-acetyl-L-glutamate + ATP = N-acetyl-L-glutamyl 5-phosphate + ADP. The protein operates within amino-acid biosynthesis; L-arginine biosynthesis; N(2)-acetyl-L-ornithine from L-glutamate: step 2/4. In terms of biological role, catalyzes the ATP-dependent phosphorylation of N-acetyl-L-glutamate. The chain is Acetylglutamate kinase from Deinococcus radiodurans (strain ATCC 13939 / DSM 20539 / JCM 16871 / CCUG 27074 / LMG 4051 / NBRC 15346 / NCIMB 9279 / VKM B-1422 / R1).